The sequence spans 122 residues: UPF0102 protein MUL_2060 (122 aa).

This sequence belongs to the UPF0102 family.

The chain is UPF0102 protein MUL_2060 from Mycobacterium ulcerans (strain Agy99).